The primary structure comprises 414 residues: MSGAPPSYSFVALPPRAKDGLVVFGKNSARPRDEVQEVVYFPAVDHEAESKVECTYISIDQVPRTHAIVISRPAWLWGAEMGANEHGVCIANEAINAREPAAETEALLGMDLVRLGLERGTTAKEALDIIVSLLDEHGQGGNYYEDAHSCHSFQSAYLLVDRDEAWVLETVGKYWAAERITEGVRCICNHLSLTTKMDEEHPELRTYAQSQGWWTGEDEFNFAQVFSPADDHLDCCAGKDSLEKQEESITVQTMINILRDKASGVCIDSESFLTTASIVSVLPQNRSSPCIHYFTGTPDPSRSIFKPFIFVDDVKLVPKAQSPCFGDDDPAKKEPRFQEKPDRRHELYKAHEWARAVIESDQEQGRTLRKTMLELEKQGLEAMEEILSSPEPPDPAEVGDLFYDCVDTEMKFFK.

Belongs to the peptidase C69 family. Secernin subfamily.

Its subcellular location is the cytoplasm. Functionally, regulates exocytosis in mast cells. Increases both the extent of secretion and the sensitivity of mast cells to stimulation with calcium. The protein is Secernin-1 (Scrn1) of Rattus norvegicus (Rat).